Reading from the N-terminus, the 306-residue chain is tRNA dimethylallyltransferase (306 aa).

ATP is bound at residue 11–18 (GPTAVGKS). 13–18 (TAVGKS) is a binding site for substrate. Positions 35–38 (DSIQ) are interaction with substrate tRNA.

It belongs to the IPP transferase family. Monomer. Mg(2+) serves as cofactor.

The catalysed reaction is adenosine(37) in tRNA + dimethylallyl diphosphate = N(6)-dimethylallyladenosine(37) in tRNA + diphosphate. Functionally, catalyzes the transfer of a dimethylallyl group onto the adenine at position 37 in tRNAs that read codons beginning with uridine, leading to the formation of N6-(dimethylallyl)adenosine (i(6)A). This chain is tRNA dimethylallyltransferase, found in Borreliella burgdorferi (strain ATCC 35210 / DSM 4680 / CIP 102532 / B31) (Borrelia burgdorferi).